A 307-amino-acid polypeptide reads, in one-letter code: MmsAB operon regulatory protein (307 aa).

Residues 201-299 (DGLHAYMREH…GLSPSAYRQR (99 aa)) form the HTH araC/xylS-type domain. DNA-binding regions (H-T-H motif) lie at residues 218–239 (ERLA…KAIT) and 266–289 (VARV…SKVM).

Its function is as follows. Regulatory protein for the mmsAB operon. Activates the transcription of the mmsAB genes. The protein is MmsAB operon regulatory protein of Pseudomonas aeruginosa (strain ATCC 15692 / DSM 22644 / CIP 104116 / JCM 14847 / LMG 12228 / 1C / PRS 101 / PAO1).